The sequence spans 216 residues: Adenylate kinase (216 aa).

Gly10–Thr15 is an ATP binding site. The tract at residues Ser30 to Val59 is NMP. Residues Thr31, Arg36, Gly57 to Val59, Gly85 to Arg88, and Gln92 contribute to the AMP site. The tract at residues Gly122–Asp159 is LID. ATP is bound by residues Arg123 and Val132–Tyr133. Arg156 and Arg167 together coordinate AMP. Gly202 serves as a coordination point for ATP.

The protein belongs to the adenylate kinase family. As to quaternary structure, monomer.

Its subcellular location is the cytoplasm. The enzyme catalyses AMP + ATP = 2 ADP. The protein operates within purine metabolism; AMP biosynthesis via salvage pathway; AMP from ADP: step 1/1. Functionally, catalyzes the reversible transfer of the terminal phosphate group between ATP and AMP. Plays an important role in cellular energy homeostasis and in adenine nucleotide metabolism. This Pseudomonas fluorescens (strain Pf0-1) protein is Adenylate kinase.